Reading from the N-terminus, the 205-residue chain is Leucyl/phenylalanyl-tRNA--protein transferase (205 aa).

This sequence belongs to the L/F-transferase family.

It localises to the cytoplasm. It catalyses the reaction N-terminal L-lysyl-[protein] + L-leucyl-tRNA(Leu) = N-terminal L-leucyl-L-lysyl-[protein] + tRNA(Leu) + H(+). It carries out the reaction N-terminal L-arginyl-[protein] + L-leucyl-tRNA(Leu) = N-terminal L-leucyl-L-arginyl-[protein] + tRNA(Leu) + H(+). The catalysed reaction is L-phenylalanyl-tRNA(Phe) + an N-terminal L-alpha-aminoacyl-[protein] = an N-terminal L-phenylalanyl-L-alpha-aminoacyl-[protein] + tRNA(Phe). Functionally, functions in the N-end rule pathway of protein degradation where it conjugates Leu, Phe and, less efficiently, Met from aminoacyl-tRNAs to the N-termini of proteins containing an N-terminal arginine or lysine. This Mesorhizobium japonicum (strain LMG 29417 / CECT 9101 / MAFF 303099) (Mesorhizobium loti (strain MAFF 303099)) protein is Leucyl/phenylalanyl-tRNA--protein transferase.